The primary structure comprises 192 residues: Flavin prenyltransferase UbiX (192 aa).

Residues 10–12, Ser-36, 92–95, and Arg-127 each bind FMN; these read GAS and SVAT. The dimethylallyl phosphate site is built by Tyr-157 and Lys-173.

The protein belongs to the UbiX/PAD1 family.

It catalyses the reaction dimethylallyl phosphate + FMNH2 = prenylated FMNH2 + phosphate. Flavin prenyltransferase that catalyzes the synthesis of the prenylated FMN cofactor (prenyl-FMN) for 4-hydroxy-3-polyprenylbenzoic acid decarboxylase UbiD. The prenyltransferase is metal-independent and links a dimethylallyl moiety from dimethylallyl monophosphate (DMAP) to the flavin N5 and C6 atoms of FMN. The chain is Flavin prenyltransferase UbiX from Chlamydia trachomatis serovar D (strain ATCC VR-885 / DSM 19411 / UW-3/Cx).